Here is a 1108-residue protein sequence, read N- to C-terminus: cGMP-inhibited 3',5'-cyclic phosphodiesterase 3B (1108 aa).

Residues 1–11 (MRKDERERDTP) are compositionally biased toward basic and acidic residues. The disordered stretch occupies residues 1–32 (MRKDERERDTPAMRSPPPPPPPATATAASPPE). The segment at 1-32 (MRKDERERDTPAMRSPPPPPPPATATAASPPE) is interaction with RAPGEF3. Over residues 14–23 (RSPPPPPPPA) the composition is skewed to pro residues. Serine 15 carries the phosphoserine modification. The next 6 helical transmembrane spans lie at 73 to 93 (AGAR…LLGA), 114 to 134 (LSLS…CFLT), 144 to 164 (AGSW…FAAW), 175 to 195 (AAAA…LTLA), 204 to 224 (VLVL…LGAL), and 231 to 251 (LLSC…DHFF). Position 279 is a phosphoserine; by PKB/AKT1 or PKB/AKT2 (serine 279). Serine 280 and serine 427 each carry phosphoserine. Residues 405–448 (DRKLHKGLSSKPSFPTAQLRRSSGASGLLTSEHHSRWDRSGGKR) form a disordered region. Polar residues predominate over residues 414-433 (SKPSFPTAQLRRSSGASGLL). Residues 421-445 (AQLRRSSGASGLLTSEHHSRWDRSG) are interaction with PIK3R6. The segment covering 435–445 (SEHHSRWDRSG) has biased composition (basic and acidic residues). The PDEase domain occupies 633–1070 (PNIDQEVLLD…KIWKEIIEEE (438 aa)). The Proton donor role is filled by histidine 719. Histidine 719 contributes to the AMP binding site. The Mg(2+) site is built by histidine 723, histidine 803, aspartate 804, and aspartate 919. Positions 804, 919, and 970 each coordinate AMP. A compositionally biased stretch (acidic residues) spans 999 to 1033 (EEGDDTESDDDDDDDDDDDDDDDEELDSDDEETED). Positions 999 to 1042 (EEGDDTESDDDDDDDDDDDDDDDEELDSDDEETEDNLNPKPQRR) are disordered.

Belongs to the cyclic nucleotide phosphodiesterase family. PDE3 subfamily. Homodimer. Interacts with PIK3CG; regulates PDE3B activity and thereby cAMP levels in cells. Interacts with RAPGEF3 and PIK3R6; form a signaling complex that regulates phosphatidylinositol 3-kinase gamma in angiogenesis. Interacts with ABHD15; this interaction regulates PDE3B's stability and expression and, thereby, impacts the antilipolytic action of insulin. The cofactor is Mg(2+). Mn(2+) is required as a cofactor. Post-translationally, phosphorylation at Ser-279 mediates insulin-induced activation of PDE3B. In terms of tissue distribution, abundant in adipose tissues.

It is found in the membrane. It carries out the reaction a nucleoside 3',5'-cyclic phosphate + H2O = a nucleoside 5'-phosphate + H(+). It catalyses the reaction 3',5'-cyclic AMP + H2O = AMP + H(+). The enzyme catalyses 3',5'-cyclic GMP + H2O = GMP + H(+). Its activity is regulated as follows. Inhibited by cGMP. Functionally, cyclic nucleotide phosphodiesterase with a dual-specificity for the second messengers cAMP and cGMP, which are key regulators of many important physiological processes. Regulates angiogenesis by inhibiting the cAMP-dependent guanine nucleotide exchange factor RAPGEF3 and downstream phosphatidylinositol 3-kinase gamma-mediated signaling. Controls cardiac contractility by reducing cAMP concentration in cardiocytes. This chain is cGMP-inhibited 3',5'-cyclic phosphodiesterase 3B, found in Rattus norvegicus (Rat).